We begin with the raw amino-acid sequence, 157 residues long: S-ribosylhomocysteine lyase (157 aa).

Fe cation-binding residues include His54, His58, and Cys126.

Belongs to the LuxS family. In terms of assembly, homodimer. It depends on Fe cation as a cofactor.

It carries out the reaction S-(5-deoxy-D-ribos-5-yl)-L-homocysteine = (S)-4,5-dihydroxypentane-2,3-dione + L-homocysteine. Its function is as follows. Involved in the synthesis of autoinducer 2 (AI-2) which is secreted by bacteria and is used to communicate both the cell density and the metabolic potential of the environment. The regulation of gene expression in response to changes in cell density is called quorum sensing. Catalyzes the transformation of S-ribosylhomocysteine (RHC) to homocysteine (HC) and 4,5-dihydroxy-2,3-pentadione (DPD). The sequence is that of S-ribosylhomocysteine lyase from Bacillus licheniformis (strain ATCC 14580 / DSM 13 / JCM 2505 / CCUG 7422 / NBRC 12200 / NCIMB 9375 / NCTC 10341 / NRRL NRS-1264 / Gibson 46).